We begin with the raw amino-acid sequence, 285 residues long: 2-dehydro-3-deoxyphosphooctonate aldolase (285 aa).

This sequence belongs to the KdsA family.

Its subcellular location is the cytoplasm. It carries out the reaction D-arabinose 5-phosphate + phosphoenolpyruvate + H2O = 3-deoxy-alpha-D-manno-2-octulosonate-8-phosphate + phosphate. It functions in the pathway carbohydrate biosynthesis; 3-deoxy-D-manno-octulosonate biosynthesis; 3-deoxy-D-manno-octulosonate from D-ribulose 5-phosphate: step 2/3. The protein operates within bacterial outer membrane biogenesis; lipopolysaccharide biosynthesis. This is 2-dehydro-3-deoxyphosphooctonate aldolase from Albidiferax ferrireducens (strain ATCC BAA-621 / DSM 15236 / T118) (Rhodoferax ferrireducens).